The sequence spans 145 residues: Chaperonin GroEL (145 aa).

It belongs to the chaperonin (HSP60) family. As to quaternary structure, forms a cylinder of 14 subunits composed of two heptameric rings stacked back-to-back. Interacts with the co-chaperonin GroES.

It is found in the cytoplasm. The enzyme catalyses ATP + H2O + a folded polypeptide = ADP + phosphate + an unfolded polypeptide.. In terms of biological role, together with its co-chaperonin GroES, plays an essential role in assisting protein folding. The GroEL-GroES system forms a nano-cage that allows encapsulation of the non-native substrate proteins and provides a physical environment optimized to promote and accelerate protein folding. The protein is Chaperonin GroEL of Thermus thermophilus.